The primary structure comprises 226 residues: Large ribosomal subunit protein uL3 (226 aa).

The disordered stretch occupies residues 135–158 (MSSQRASHGNSRSHNVPGSIGMAQ). The span at 137-150 (SQRASHGNSRSHNV) shows a compositional bias: polar residues. Residue glutamine 158 is modified to N5-methylglutamine.

The protein belongs to the universal ribosomal protein uL3 family. As to quaternary structure, part of the 50S ribosomal subunit. Forms a cluster with proteins L14 and L19. In terms of processing, methylated by PrmB.

One of the primary rRNA binding proteins, it binds directly near the 3'-end of the 23S rRNA, where it nucleates assembly of the 50S subunit. This Polaromonas naphthalenivorans (strain CJ2) protein is Large ribosomal subunit protein uL3.